The primary structure comprises 399 residues: N-acetylglucosamine-6-phosphate deacetylase (399 aa).

Residues H65, H67, and E135 each coordinate a divalent metal cation. 146–147 (AH) lines the substrate pocket. A divalent metal cation is bound by residues H201 and H222. Residues 225-226 (NG), R233, and 254-257 (DGHH) contribute to the substrate site. D279 is a binding site for a divalent metal cation. The Proton donor/acceptor role is filled by D279. A substrate-binding site is contributed by 312–314 (LAG).

Belongs to the metallo-dependent hydrolases superfamily. NagA family. As to quaternary structure, homodimer. A divalent metal cation serves as cofactor.

It catalyses the reaction N-acetyl-D-glucosamine 6-phosphate + H2O = D-glucosamine 6-phosphate + acetate. It participates in amino-sugar metabolism; N-acetylneuraminate degradation; D-fructose 6-phosphate from N-acetylneuraminate: step 4/5. Involved in the first committed step in the biosynthesis of amino-sugar-nucleotides. Catalyzes the hydrolysis of the N-acetyl group of N-acetylglucosamine-6-phosphate (GlcNAc-6-P) to yield glucosamine 6-phosphate and acetate. The protein is N-acetylglucosamine-6-phosphate deacetylase (manD) of Vibrio furnissii.